The sequence spans 658 residues: Serine/threonine-protein kinase shk1/pak1 (658 aa).

Disordered regions lie at residues 1-21 (MERGTLQPRKKAPNGYGITPI), 39-104 (RKLK…SYDE), 126-147 (GGSSPTSSYGSGSASPRKSTVI), and 213-365 (GAKP…QQSN). Positions 66–98 (PLSQSRTTVSRVSLGSRQHSSSSIRKLQTNVSD) are enriched in polar residues. The span at 129-140 (SPTSSYGSGSAS) shows a compositional bias: low complexity. The 14-residue stretch at 147–160 (ISSPFDPKHVTHVG) folds into the CRIB domain. 2 stretches are compositionally biased toward low complexity: residues 226–254 (PLLSVSALSSSSHLQPTSATSSSSRLYPS) and 262–272 (ASSSSSPLLSS). Positions 273-300 (QTVKTTTSNASRQPSPLVSSKSTDNIIR) are enriched in polar residues. Phosphoserine is present on residues Ser301 and Ser303. A Protein kinase domain is found at 386–637 (YRNFVKIGQG…SGELLRHPFL (252 aa)). ATP-binding positions include 392–400 (IGQGASGDV) and Lys415. Asp505 (proton acceptor) is an active-site residue.

It belongs to the protein kinase superfamily. STE Ser/Thr protein kinase family. STE20 subfamily. Forms an activated complex with GTP-bound ras-like cdc42. Interacts with skb1 and the SH3 domain of skb5 via its amino-terminal regulatory domain. Skb1, cdc42 and shk1 are able to form a ternary complex in vivo. Interacts with rga8 and may interact with byr2. Autophosphorylated on serine residues.

The protein localises to the cytoplasm. Its subcellular location is the cytoskeleton. The protein resides in the spindle. The catalysed reaction is L-seryl-[protein] + ATP = O-phospho-L-seryl-[protein] + ADP + H(+). It catalyses the reaction L-threonyl-[protein] + ATP = O-phospho-L-threonyl-[protein] + ADP + H(+). In terms of biological role, MAP4K component of the MAPK pathway required for the mating pheromone response. Phosphorylates histone H2B to form H2BS10ph. Phosphorylates tea1. Required for skb1-dependent mitotic inhibitory function. Regulates microtubule dynamics and cell polarity. This Schizosaccharomyces pombe (strain 972 / ATCC 24843) (Fission yeast) protein is Serine/threonine-protein kinase shk1/pak1 (shk1).